Consider the following 626-residue polypeptide: Receptor-like protein 4 (626 aa).

Positions 1–22 (MMLRFILASLLLSSFSLYSSLA) are cleaved as a signal peptide. Topologically, residues 23-549 (RPAPYALRIS…CGPHLSSGAK (527 aa)) are extracellular. Asn-61, Asn-282, Asn-333, and Asn-417 each carry an N-linked (GlcNAc...) asparagine glycan. 4 LRR repeats span residues 420–444 (RWFI…ISKL), 445–468 (KHLQ…LGSV), 470–492 (SLEV…LGEL), and 493–516 (TSLR…VGGR). N-linked (GlcNAc...) asparagine glycans are attached at residues Asn-451 and Asn-482. An N-linked (GlcNAc...) asparagine glycan is attached at Asn-524. A helical transmembrane segment spans residues 550-570 (IGIAFGVSLAFLLIVACAMIW). The Cytoplasmic portion of the chain corresponds to 571-626 (WKRRQNILRAQQIAARGAPYAKKRTHVSHDIQMSRHGHNNHGQARTAVENGPSLLS). Residues 603 to 626 (MSRHGHNNHGQARTAVENGPSLLS) are disordered.

It belongs to the RLP family.

The protein localises to the cell membrane. In Arabidopsis thaliana (Mouse-ear cress), this protein is Receptor-like protein 4.